We begin with the raw amino-acid sequence, 352 residues long: Peptide chain release factor 1 (352 aa).

An N5-methylglutamine modification is found at Gln233. Residues 288-309 (NAKDRKEQVGSGDRSERIRTYN) form a disordered region. Residues 289–306 (AKDRKEQVGSGDRSERIR) show a composition bias toward basic and acidic residues.

The protein belongs to the prokaryotic/mitochondrial release factor family. Post-translationally, methylated by PrmC. Methylation increases the termination efficiency of RF1.

The protein resides in the cytoplasm. Its function is as follows. Peptide chain release factor 1 directs the termination of translation in response to the peptide chain termination codons UAG and UAA. In Helicobacter pylori (strain HPAG1), this protein is Peptide chain release factor 1.